A 280-amino-acid chain; its full sequence is tRNA dimethylallyltransferase (280 aa).

9–16 contacts ATP; it reads GPTGSGKT. 11–16 provides a ligand contact to substrate; sequence TGSGKT. The interval 34–37 is interaction with substrate tRNA; that stretch reads DSVS.

The protein belongs to the IPP transferase family. Monomer. Requires Mg(2+) as cofactor.

It carries out the reaction adenosine(37) in tRNA + dimethylallyl diphosphate = N(6)-dimethylallyladenosine(37) in tRNA + diphosphate. In terms of biological role, catalyzes the transfer of a dimethylallyl group onto the adenine at position 37 in tRNAs that read codons beginning with uridine, leading to the formation of N6-(dimethylallyl)adenosine (i(6)A). The protein is tRNA dimethylallyltransferase of Acholeplasma laidlawii (strain PG-8A).